We begin with the raw amino-acid sequence, 272 residues long: Hydroxyacylglutathione hydrolase (272 aa).

Residues H62, H64, D66, H67, H126, D146, and H184 each contribute to the Zn(2+) site.

Belongs to the metallo-beta-lactamase superfamily. Glyoxalase II family. In terms of assembly, monomer. Requires Zn(2+) as cofactor.

The catalysed reaction is an S-(2-hydroxyacyl)glutathione + H2O = a 2-hydroxy carboxylate + glutathione + H(+). It participates in secondary metabolite metabolism; methylglyoxal degradation; (R)-lactate from methylglyoxal: step 2/2. In terms of biological role, thiolesterase that catalyzes the hydrolysis of S-D-lactoyl-glutathione to form glutathione and D-lactic acid. The sequence is that of Hydroxyacylglutathione hydrolase from Saccharophagus degradans (strain 2-40 / ATCC 43961 / DSM 17024).